Consider the following 261-residue polypeptide: UPF0246 protein Vapar_1301 (261 aa).

It belongs to the UPF0246 family.

In Variovorax paradoxus (strain S110), this protein is UPF0246 protein Vapar_1301.